A 77-amino-acid chain; its full sequence is Sec-independent protein translocase protein TatA (77 aa).

Residues 1 to 21 traverse the membrane as a helical segment; that stretch reads MGGISIWQLLIIALIVVLLFG. 2 stretches are compositionally biased toward basic and acidic residues: residues 47–56 and 65–77; these read EKKALEDKEA and TEKK…KEQA. The tract at residues 47–77 is disordered; that stretch reads EKKALEDKEAAAQTTQQATEKKPEADKKEQA.

It belongs to the TatA/E family. As to quaternary structure, the Tat system comprises two distinct complexes: a TatABC complex, containing multiple copies of TatA, TatB and TatC subunits, and a separate TatA complex, containing only TatA subunits. Substrates initially bind to the TatABC complex, which probably triggers association of the separate TatA complex to form the active translocon.

Its subcellular location is the cell inner membrane. Its function is as follows. Part of the twin-arginine translocation (Tat) system that transports large folded proteins containing a characteristic twin-arginine motif in their signal peptide across membranes. TatA could form the protein-conducting channel of the Tat system. The sequence is that of Sec-independent protein translocase protein TatA from Shewanella amazonensis (strain ATCC BAA-1098 / SB2B).